We begin with the raw amino-acid sequence, 797 residues long: MKLNQFARLTPDIDQQLKELARIGLPADPQAPFADTAAAMYAAFFPEAYQPAAQQDKFAQVAVNSHQNLAEWLATKPTHMKRADFYNVALQLLGFEAFSDFDLSDPISFMTVTKLPSVAHDLLHTADLLQASYLLLTTRTKHLVSFLDDLANRGFFKDFQAQSSQPAHLLFNGKVQQVFDARQAVREVVWIESDVDSDHDGQRDLLEATIYRPKATDRGLKVPVLFTANPYFHGTNDVTAATHVPETVLAVKPHGASKAEVTAAPASKPKLPARPVTGETKQAAAYAEENSPYAFNDYFLARGFAVVYSAGVGTRYSDGFRTIGGPEETDGAVAVIEWLTGKRRAFTNRTDGVAIKAWWSSGKVAMTGKSYLATLAIAGATTGVEGLKTIVADAGISSWYDYYRENGLVVAPGGYQGEDADVLAVDTFSRQKSGGDMIRLKKAWEQHLAQMTRDQDRTTGAYTAWWDARNYRKNAANVKADVVLIHGLNDWNVKPKNAIRFWQAIADLPIQKKLILHQGQHVYVHNVRSLDFLDMMNLWLTHELLGVANQAEQVLPNVLVQDNVTPQTWSAYSDFANPAAEHVTTTANLKTDFESATDQFSDHATATFTAQHDTSASFEKAIITPNSAYVNSRLWLTQPVLEHDRVLEGIPHLELTLAVDAPTGILSVRLVDLGKAKRFEENAATVGASGLQLGFDFKTTDIVEFKPANKETPSKLITLGHINLQNPKNAYEVQTITPGQFFHVSLDLQPTHYHLPAGRQLALIIHGADMAQTIRPTKVTHYQLDLAKSTLTLPFRI.

Catalysis depends on charge relay system residues Ser370, Asp490, and His521.

This sequence belongs to the peptidase S15 family. In terms of assembly, homodimer.

It is found in the cytoplasm. It catalyses the reaction Hydrolyzes Xaa-Pro-|- bonds to release unblocked, N-terminal dipeptides from substrates including Ala-Pro-|-p-nitroanilide and (sequentially) Tyr-Pro-|-Phe-Pro-|-Gly-Pro-|-Ile.. Functionally, removes N-terminal dipeptides sequentially from polypeptides having unsubstituted N-termini provided that the penultimate residue is proline. The protein is Xaa-Pro dipeptidyl-peptidase of Lacticaseibacillus rhamnosus (Lactobacillus rhamnosus).